Consider the following 216-residue polypeptide: RNA chaperone ProQ (216 aa).

Over residues 105–115 the composition is skewed to basic and acidic residues; it reads ESKAKVAEKRK. Residues 105–159 are disordered; that stretch reads ESKAKVAEKRKAQNAAKPGAKKSYKSKTVPAFKSSPKGTNQDNVKPKAKLPPPEK.

It belongs to the ProQ family.

The protein resides in the cytoplasm. RNA chaperone with significant RNA binding, RNA strand exchange and RNA duplexing activities. This Pseudoalteromonas atlantica (strain T6c / ATCC BAA-1087) protein is RNA chaperone ProQ.